An 80-amino-acid chain; its full sequence is CLAVATA3/ESR (CLE)-related protein 4 (80 aa).

A signal peptide spans 1-22; the sequence is MASFKLWVCLILLLLEFSVHQC. The disordered stretch occupies residues 55–80; it reads SKDGQTVLGTLDSKRLSPGGPDPRHH. 2 positions are modified to hydroxyproline: Pro72 and Pro75. Pro75 carries an O-linked (Ara...) hydroxyproline glycan.

Belongs to the CLV3/ESR signal peptide family. Post-translationally, the O-glycosylation (arabinosylation) of the hydroxyproline Pro-75 enhances binding affinity of the CLE4p peptide for its receptor. As to expression, expressed in roots and seedlings.

It is found in the secreted. The protein resides in the extracellular space. Functionally, extracellular signal peptide that regulates cell fate. This chain is CLAVATA3/ESR (CLE)-related protein 4, found in Arabidopsis thaliana (Mouse-ear cress).